The sequence spans 257 residues: Leucine-rich repeat-containing protein 3 (257 aa).

A signal peptide spans 1–32; it reads MGPRGRQSPSSPLAPSQGSCFFILFCLRLGAS. Positions 33-64 constitute an LRRNT domain; it reads CPQSCQCPDHAGAVAVHCSSRGLQEIPRDIPA. LRR repeat units follow at residues 65–86, 89–110, and 114–135; these read NTVL…AFQH, QLRE…AFSG, and GLRL…ALGK. The 54-residue stretch at 145–198 folds into the LRRCT domain; it reads NPLHCECALQEALWELKLDPDSVDEIACHTSAQEQFVGKPLIQVLDSGASFCST. The chain crosses the membrane as a helical span at residues 205–225; sequence VAMLVTMFGWFTMVIAYVVYY.

This sequence belongs to the LRRC3 family.

It localises to the membrane. The chain is Leucine-rich repeat-containing protein 3 (Lrrc3) from Rattus norvegicus (Rat).